The chain runs to 283 residues: Phosphatidylglycerol--prolipoprotein diacylglyceryl transferase (283 aa).

4 helical membrane passes run 17 to 37, 56 to 76, 92 to 112, and 117 to 137; these read LAVR…TFLG, FLTW…VLFY, WEGG…IWLF, and GIGF…GLAS. R139 provides a ligand contact to a 1,2-diacyl-sn-glycero-3-phospho-(1'-sn-glycerol). A run of 3 helical transmembrane segments spans residues 194 to 214, 222 to 242, and 255 to 275; these read PSQL…VWLF, GQVA…AEFA, and GLSM…VGFV.

This sequence belongs to the Lgt family.

It localises to the cell inner membrane. It carries out the reaction L-cysteinyl-[prolipoprotein] + a 1,2-diacyl-sn-glycero-3-phospho-(1'-sn-glycerol) = an S-1,2-diacyl-sn-glyceryl-L-cysteinyl-[prolipoprotein] + sn-glycerol 1-phosphate + H(+). It participates in protein modification; lipoprotein biosynthesis (diacylglyceryl transfer). Its function is as follows. Catalyzes the transfer of the diacylglyceryl group from phosphatidylglycerol to the sulfhydryl group of the N-terminal cysteine of a prolipoprotein, the first step in the formation of mature lipoproteins. The sequence is that of Phosphatidylglycerol--prolipoprotein diacylglyceryl transferase from Neisseria meningitidis serogroup A / serotype 4A (strain DSM 15465 / Z2491).